The chain runs to 369 residues: Naringenin,2-oxoglutarate 3-dioxygenase (369 aa).

One can recognise a Fe2OG dioxygenase domain in the interval 193–297 (CVDMDQKVVV…RLSIATFQNP (105 aa)). Fe cation contacts are provided by histidine 220, aspartate 222, and histidine 278. 2-oxoglutarate is bound at residue arginine 288.

It belongs to the iron/ascorbate-dependent oxidoreductase family. Fe(2+) serves as cofactor. It depends on L-ascorbate as a cofactor.

It catalyses the reaction a (2S)-flavan-4-one + 2-oxoglutarate + O2 = a (2R,3R)-dihydroflavonol + succinate + CO2. It participates in secondary metabolite biosynthesis; flavonoid biosynthesis. In terms of biological role, catalyzes the 3-beta-hydroxylation of 2S-flavanones to 2R,3R-dihydroflavonols which are intermediates in the biosynthesis of flavonols, anthocyanidins, catechins and proanthocyanidins in plants. The protein is Naringenin,2-oxoglutarate 3-dioxygenase (AN3) of Petunia hybrida (Petunia).